The sequence spans 178 residues: uncharacterized protein (178 aa).

In terms of biological role, this protein is non-essential for virus function. This is an uncharacterized protein from Sulfolobus spindle-shape virus 1 (SSV1).